The chain runs to 65 residues: Photosystem II reaction center protein J (65 aa).

Positions 1 to 17 are enriched in basic and acidic residues; the sequence is MSTKLKGPDGRIPDRLP. The interval 1–21 is disordered; it reads MSTKLKGPDGRIPDRLPDGSP. A helical transmembrane segment spans residues 36–56; the sequence is LWLVATVGGMAVLSVLGLFFF.

Belongs to the PsbJ family. PSII is composed of 1 copy each of membrane proteins PsbA, PsbB, PsbC, PsbD, PsbE, PsbF, PsbH, PsbI, PsbJ, PsbK, PsbL, PsbM, PsbT, PsbX, PsbY, Psb30/Ycf12, peripheral proteins PsbO, CyanoQ (PsbQ), PsbU, PsbV and a large number of cofactors. It forms dimeric complexes.

Its subcellular location is the cellular thylakoid membrane. Functionally, one of the components of the core complex of photosystem II (PSII). PSII is a light-driven water:plastoquinone oxidoreductase that uses light energy to abstract electrons from H(2)O, generating O(2) and a proton gradient subsequently used for ATP formation. It consists of a core antenna complex that captures photons, and an electron transfer chain that converts photonic excitation into a charge separation. This is Photosystem II reaction center protein J from Prochlorococcus marinus (strain MIT 9313).